The following is a 170-amino-acid chain: Cathelicidin antimicrobial peptide (170 aa).

Positions 1–30 are cleaved as a signal peptide; that stretch reads MKTQMDGHSLGRWSLVLLLLGLVMPLAIVA. The propeptide at 31-131 is cathelin-like domain (CLD); sequence QVLSYKEAVL…DISCDKDNRR (101 aa). Cystine bridges form between Cys86–Cys97 and Cys108–Cys125. The tract at residues 150–162 is active core; sequence FKRIVQRIKDFLR.

It belongs to the cathelicidin family. In terms of assembly, monomer, homodimer or homotrimer (in vitro). Oligomerizes as tetra- or hexamer in solution (in vitro). Proteolytically cleaved by proteinase PRTN3 into antibacterial peptide LL-37. Proteolytically cleaved by cathepsin CTSG and neutrophil elastase ELANE. Post-translationally, resistant to proteolytic degradation in solution, and when bound to both zwitterionic (mimicking mammalian membranes) and negatively charged membranes (mimicking bacterial membranes). In terms of processing, after secretion onto the skin surface, the CAMP gene product is processed by a serine protease-dependent mechanism into multiple novel antimicrobial peptides distinct from and shorter than cathelicidin LL-37. These peptides show enhanced antimicrobial action, acquiring the ability to kill skin pathogens such as S.aureus, E.coli and C.albicans. These peptides have lost the ability to stimulate CXCL8/IL8 release from keratinocytes. The peptides act synergistically, killing bacteria at lower concentrations when present together, and maintain activity at increased salt condition.

The protein localises to the secreted. Its subcellular location is the vesicle. In terms of biological role, antimicrobial protein that is an integral component of the innate immune system. Binds to bacterial lipopolysaccharides (LPS). Acts via neutrophil N-formyl peptide receptors to enhance the release of CXCL2. Postsecretory processing generates multiple cathelicidin antimicrobial peptides with various lengths which act as a topical antimicrobial defense in sweat on skin. The unprocessed precursor form, cathelicidin antimicrobial peptide, inhibits the growth of Gram-negative E.coli and E.aerogenes with efficiencies comparable to that of the mature peptide LL-37 (in vitro). Its function is as follows. Antimicrobial peptide that is an integral component of the innate immune system. Binds to bacterial lipopolysaccharides (LPS). Causes membrane permeabilization by forming transmembrane pores (in vitro). Causes lysis of E.coli. Exhibits antimicrobial activity against Gram-negative bacteria such as P.aeruginosa, S.typhimurium, E.aerogenes, E.coli and P.syringae, Gram-positive bacteria such as L.monocytogenes, S.epidermidis, S.pyogenes and S.aureus, as well as vancomycin-resistant enterococci (in vitro). Exhibits antimicrobial activity against methicillin-resistant S.aureus, P.mirabilis, and C.albicans in low-salt media, but not in media containing 100 mM NaCl (in vitro). Forms chiral supramolecular assemblies with quinolone signal (PQS) molecules of P.aeruginosa, which may lead to interference of bacterial quorum signaling and perturbance of bacterial biofilm formation. May form supramolecular fiber-like assemblies on bacterial membranes. Induces cytokine and chemokine producation as well as TNF/TNFA and CSF2/GMCSF production in normal human keratinocytes. Exhibits hemolytic activity against red blood cells. Functionally, exhibits antimicrobial activity against E.coli and B.megaterium (in vitro). This is Cathelicidin antimicrobial peptide from Pongo pygmaeus (Bornean orangutan).